A 115-amino-acid chain; its full sequence is Protein TrbA (115 aa).

The next 4 helical transmembrane spans lie at 5-25 (YLKM…GYFF), 39-59 (LVFL…LWFL), 60-80 (CGAI…AALP), and 91-111 (IFIC…FIRG).

Its subcellular location is the cell membrane. The sequence is that of Protein TrbA (trbA) from Escherichia coli (strain K12).